Consider the following 293-residue polypeptide: Ribonuclease HIII (293 aa).

The 216-residue stretch at leucine 78 to arginine 293 folds into the RNase H type-2 domain. Positions 84, 85, and 187 each coordinate a divalent metal cation.

The protein belongs to the RNase HII family. RnhC subfamily. Mn(2+) serves as cofactor. Mg(2+) is required as a cofactor.

It localises to the cytoplasm. It carries out the reaction Endonucleolytic cleavage to 5'-phosphomonoester.. In terms of biological role, endonuclease that specifically degrades the RNA of RNA-DNA hybrids. The protein is Ribonuclease HIII of Streptococcus pneumoniae (strain 70585).